The following is a 434-amino-acid chain: Histidinol dehydrogenase (434 aa).

NAD(+) is bound by residues Y130, Q188, and N211. The substrate site is built by S237, Q259, and H262. Zn(2+) is bound by residues Q259 and H262. Catalysis depends on proton acceptor residues E326 and H327. Substrate contacts are provided by H327, D360, E414, and H419. A Zn(2+)-binding site is contributed by D360. Position 419 (H419) interacts with Zn(2+).

The protein belongs to the histidinol dehydrogenase family. In terms of assembly, homodimer. Requires Zn(2+) as cofactor.

The catalysed reaction is L-histidinol + 2 NAD(+) + H2O = L-histidine + 2 NADH + 3 H(+). Its pathway is amino-acid biosynthesis; L-histidine biosynthesis; L-histidine from 5-phospho-alpha-D-ribose 1-diphosphate: step 9/9. In terms of biological role, catalyzes the sequential NAD-dependent oxidations of L-histidinol to L-histidinaldehyde and then to L-histidine. The sequence is that of Histidinol dehydrogenase from Shigella sonnei (strain Ss046).